A 165-amino-acid chain; its full sequence is ATP synthase subunit b (165 aa).

Residues leucine 10–phenylalanine 30 traverse the membrane as a helical segment.

It belongs to the ATPase B chain family. F-type ATPases have 2 components, F(1) - the catalytic core - and F(0) - the membrane proton channel. F(1) has five subunits: alpha(3), beta(3), gamma(1), delta(1), epsilon(1). F(0) has three main subunits: a(1), b(2) and c(10-14). The alpha and beta chains form an alternating ring which encloses part of the gamma chain. F(1) is attached to F(0) by a central stalk formed by the gamma and epsilon chains, while a peripheral stalk is formed by the delta and b chains.

The protein localises to the cell inner membrane. Functionally, f(1)F(0) ATP synthase produces ATP from ADP in the presence of a proton or sodium gradient. F-type ATPases consist of two structural domains, F(1) containing the extramembraneous catalytic core and F(0) containing the membrane proton channel, linked together by a central stalk and a peripheral stalk. During catalysis, ATP synthesis in the catalytic domain of F(1) is coupled via a rotary mechanism of the central stalk subunits to proton translocation. In terms of biological role, component of the F(0) channel, it forms part of the peripheral stalk, linking F(1) to F(0). This is ATP synthase subunit b from Bacteroides fragilis (strain ATCC 25285 / DSM 2151 / CCUG 4856 / JCM 11019 / LMG 10263 / NCTC 9343 / Onslow / VPI 2553 / EN-2).